A 253-amino-acid polypeptide reads, in one-letter code: Probable transcriptional regulatory protein Mmar10_2433 (253 aa).

This sequence belongs to the TACO1 family.

The protein resides in the cytoplasm. This chain is Probable transcriptional regulatory protein Mmar10_2433, found in Maricaulis maris (strain MCS10) (Caulobacter maris).